Here is a 157-residue protein sequence, read N- to C-terminus: Transcriptional repressor NrdR (157 aa).

The segment at 1–21 (MKCPNCHKNGSRVVDSRPADN) is disordered. A zinc finger spans residues 3–34 (CPNCHKNGSRVVDSRPADNGHAIRRRRECEQC). The 91-residue stretch at 49–139 (LLVIKKNGTR…VYREFKDMHA (91 aa)) folds into the ATP-cone domain.

This sequence belongs to the NrdR family. The cofactor is Zn(2+).

Its function is as follows. Negatively regulates transcription of bacterial ribonucleotide reductase nrd genes and operons by binding to NrdR-boxes. In Ligilactobacillus salivarius (strain UCC118) (Lactobacillus salivarius), this protein is Transcriptional repressor NrdR.